Consider the following 370-residue polypeptide: Leucine-rich repeat and transmembrane domain-containing protein 2 (370 aa).

An N-terminal signal peptide occupies residues 1 to 35 (MLAPGSSPGQRGRLALQWRQVSWITCWIALYAVEA). The region spanning 36-68 (LPTCPFSCKCDSRSLEVDCSGLGLTTVPPDVPA) is the LRRNT domain. Topologically, residues 36 to 310 (LPTCPFSCKC…PASVRRAMGT (275 aa)) are extracellular. LRR repeat units lie at residues 69–90 (ATRTLLLLNNKLSALPSWAFAN), 93–114 (SLQRLDLSNNFLDRLPRSIFGD), 117–139 (NLTELQLRNNSIRTLDRDLLRHS), 141–162 (LLRHLDLSINGLAQLPPGLFDG), and 165–186 (ALRSLSLRSNRLQNLDRLTFEP). A glycan (N-linked (GlcNAc...) asparagine) is linked at Asn-90. Asn-117 and Asn-125 each carry an N-linked (GlcNAc...) asparagine glycan. Positions 198–252 (NPWECDCNLREFKHWMEWFSYRGGRLDQLACTLPKELRGKDMRMVPMEMFNYCSQ) constitute an LRRCT domain. Residue Asn-257 is glycosylated (N-linked (GlcNAc...) asparagine). The tract at residues 261–300 (GLDIPGPPCTKASPEPAKPKPGAEPEPEPSTACPQKQRHR) is disordered. The helical transmembrane segment at 311–331 (VIIAGVVCGVVCIMMVVAAAY) threads the bilayer. Topologically, residues 332–370 (GCIYASLMAKYHRELKKRQPLMGDPEGEHEDQKQISSVA) are cytoplasmic. The disordered stretch occupies residues 351–370 (PLMGDPEGEHEDQKQISSVA).

It is found in the membrane. The protein is Leucine-rich repeat and transmembrane domain-containing protein 2 (LRTM2) of Homo sapiens (Human).